Reading from the N-terminus, the 311-residue chain is Acetaldehyde dehydrogenase (311 aa).

The active-site Acyl-thioester intermediate is cysteine 131. NAD(+) contacts are provided by residues 162–170 (SVGPGTRKN) and asparagine 273.

This sequence belongs to the acetaldehyde dehydrogenase family.

It carries out the reaction acetaldehyde + NAD(+) + CoA = acetyl-CoA + NADH + H(+). The chain is Acetaldehyde dehydrogenase from Ralstonia pickettii (strain 12J).